We begin with the raw amino-acid sequence, 334 residues long: Glycosylinositol phosphorylceramide mannosyl transferase 1 (334 aa).

Residues 1-26 (MGGGEVSKEMGACSLAYRRGDQKLRK) lie on the Cytoplasmic side of the membrane. Residues 27–49 (FVTARSTKFLLFCCIAFVLVTIV) traverse the membrane as a helical; Signal-anchor for type II membrane protein segment. Topologically, residues 50–334 (CRSSRPWVNS…AVDSRNLWFW (285 aa)) are lumenal. The N-linked (GlcNAc...) asparagine glycan is linked to Asn58. Residues 145–150 (DSLNNR), 166–168 (DDD), Arg196, and 258–262 (RNCED) contribute to the substrate site. Asp168 contributes to the Mn(2+) binding site. Cys260 and Cys305 are disulfide-bonded. Residue Asp262 is part of the active site. A glycan (N-linked (GlcNAc...) asparagine) is linked at Asn271. Substrate contacts are provided by residues 289-302 (STGISSIGGHTEKR) and 292-302 (ISSIGGHTEKR).

The protein belongs to the glycosyltransferase 64 family. Requires Mn(2+) as cofactor. As to expression, expressed in leaves, roots, stem, and flowers.

Its subcellular location is the golgi apparatus membrane. It functions in the pathway protein modification; protein glycosylation. Its pathway is sphingolipid metabolism. In terms of biological role, mannosyl transferase (ManT) required for the biosynthesis of mannose-carrying glycosylinositol phosphorylceramides (GIPCs). Maybe involved in cell-cell adhesion that maintains the integrity of organs by providing mechanical strength and facilitating the movement of metabolites throughout the plant during development. Prevents abscisic acid- (ABA-) mediated effects on development (e.g. cell size, flowering time, senescence). Probably implicated in beta-(1,4)-galactan biosynthesis thus being a cell-wall synthesis-related (CWSR) protein. The chain is Glycosylinositol phosphorylceramide mannosyl transferase 1 from Arabidopsis thaliana (Mouse-ear cress).